Reading from the N-terminus, the 196-residue chain is Transmembrane 4 L6 family member 5 (196 aa).

At 1 to 9 the chain is on the cytoplasmic side; it reads MCTGKCARF. The helical transmembrane segment at 10-30 threads the bilayer; sequence VGLSLIPLSLVCIVANALLLV. Residues 31–45 are Extracellular-facing; that stretch reads PNGQTTWTKDHLSLQ. Residues 46-66 traverse the membrane as a helical segment; that stretch reads VWLMAGFVGGGLMVLCPGISA. Residues 67 to 89 lie on the Cytoplasmic side of the membrane; sequence VRAGGKGCCGAGCCGNRCRMLRS. The helical transmembrane segment at 90–110 threads the bilayer; sequence VFCSAIGLLGAIYCLSVSGTG. The interval 90 to 196 is interaction with MTOR and CASTOR1; sequence VFCSAIGLLG…DCRKKQGSSQ (107 aa). The Extracellular portion of the chain corresponds to 111–156; that stretch reads LRIGPQCLMNGSWDYHFQDTAGSYLLNRTQWNLCVEPPDVVLWNVT. Asparagine 120 carries an N-linked (GlcNAc...) asparagine glycan. Residue 123 to 128 participates in L-arginine binding; it reads WDYHFQ. Asparagine 137 and asparagine 154 each carry an N-linked (GlcNAc...) asparagine glycan. Residues 157–177 form a helical membrane-spanning segment; that stretch reads LFSLLVAASCLEILLCGVQLV. Residues 178-196 are Cytoplasmic-facing; that stretch reads NASIGVLCGDCRKKQGSSQ.

The protein belongs to the L6 tetraspanin family. In terms of assembly, interacts with MTOR; the interaction is positively regulated by arginine and is negatively regulated by leucine. Interacts with SLC38A9. Interacts with SLC7A1; the interaction is negatively regulated by arginine. Interacts with CASTOR1; the interaction is positively regulated by leucine and is negatively regulated by arginine.

Its subcellular location is the lysosome membrane. The protein resides in the cell membrane. Acts as a lysosomal membrane arginine sensor. Forms a complex with MTOR and SLC38A9 on lysosomal membranes in an arginine-regulated manner, leading to arginine efflux which enables the activation of mTORC1 which subsequently leads to RPS6KB1 and EIF4EBP1 phosphorylations. Facilitates cell cycle G1/S phase progression and the translocation of the CDK4-CCND1 complex into the nucleus. CDKN1B and RHOA/ROCK signaling activity are involved in TM4SF5-mediated acceleration of G1/S phase progression. The polypeptide is Transmembrane 4 L6 family member 5 (TM4SF5) (Bos taurus (Bovine)).